Reading from the N-terminus, the 284-residue chain is 2-dehydro-3-deoxyphosphooctonate aldolase (284 aa).

Belongs to the KdsA family.

The protein resides in the cytoplasm. The enzyme catalyses D-arabinose 5-phosphate + phosphoenolpyruvate + H2O = 3-deoxy-alpha-D-manno-2-octulosonate-8-phosphate + phosphate. Its pathway is carbohydrate biosynthesis; 3-deoxy-D-manno-octulosonate biosynthesis; 3-deoxy-D-manno-octulosonate from D-ribulose 5-phosphate: step 2/3. The protein operates within bacterial outer membrane biogenesis; lipopolysaccharide biosynthesis. The sequence is that of 2-dehydro-3-deoxyphosphooctonate aldolase from Erwinia tasmaniensis (strain DSM 17950 / CFBP 7177 / CIP 109463 / NCPPB 4357 / Et1/99).